The chain runs to 27 residues: Putative phosphoglycerate kinase (27 aa).

The protein belongs to the phosphoglycerate kinase family. In terms of assembly, monomer. Requires Mg(2+) as cofactor.

It carries out the reaction (2R)-3-phosphoglycerate + ATP = (2R)-3-phospho-glyceroyl phosphate + ADP. This chain is Putative phosphoglycerate kinase, found in Pinus strobus (Eastern white pine).